Consider the following 231-residue polypeptide: dTTP/UTP pyrophosphatase (231 aa).

D85 acts as the Proton acceptor in catalysis.

It belongs to the Maf family. YhdE subfamily. A divalent metal cation is required as a cofactor.

The protein localises to the cytoplasm. It carries out the reaction dTTP + H2O = dTMP + diphosphate + H(+). The catalysed reaction is UTP + H2O = UMP + diphosphate + H(+). Nucleoside triphosphate pyrophosphatase that hydrolyzes dTTP and UTP. May have a dual role in cell division arrest and in preventing the incorporation of modified nucleotides into cellular nucleic acids. In Psychrobacter arcticus (strain DSM 17307 / VKM B-2377 / 273-4), this protein is dTTP/UTP pyrophosphatase.